The following is a 112-amino-acid chain: ATP-dependent Clp protease adapter protein ClpS (112 aa).

The protein belongs to the ClpS family. Binds to the N-terminal domain of the chaperone ClpA.

Involved in the modulation of the specificity of the ClpAP-mediated ATP-dependent protein degradation. The chain is ATP-dependent Clp protease adapter protein ClpS from Rhodococcus opacus (strain B4).